The following is a 122-amino-acid chain: Large ribosomal subunit protein uL14 (122 aa).

The protein belongs to the universal ribosomal protein uL14 family. In terms of assembly, part of the 50S ribosomal subunit. Forms a cluster with proteins L3 and L19. In the 70S ribosome, L14 and L19 interact and together make contacts with the 16S rRNA in bridges B5 and B8.

Functionally, binds to 23S rRNA. Forms part of two intersubunit bridges in the 70S ribosome. The protein is Large ribosomal subunit protein uL14 of Xylella fastidiosa (strain M23).